The sequence spans 129 residues: Type II secretion system protein I (129 aa).

A propeptide spans 1 to 6 (MKRARG) (leader sequence). The residue at position 7 (F7) is an N-methylphenylalanine. The chain crosses the membrane as a helical span at residues 7–27 (FTLLEVLVALAIFAMVAASVL).

Belongs to the GSP I family. In terms of assembly, type II secretion is composed of four main components: the outer membrane complex, the inner membrane complex, the cytoplasmic secretion ATPase and the periplasm-spanning pseudopilus. Forms the tip of the type II pseudopilus by interacting with XcpU, XcpW and XcpX. Interacts with core component XcpT. Post-translationally, cleaved by prepilin peptidase. In terms of processing, methylated by prepilin peptidase at the amino group of the N-terminal phenylalanine once the leader sequence is cleaved by prepilin peptidase.

The protein resides in the cell inner membrane. Functionally, component of the type II secretion system required for the energy-dependent secretion of extracellular factors such as proteases and toxins from the periplasm. Part of the pseudopilus tip complex that is critical for the recognition and binding of secretion substrates. Type II pseudopilus confers increased bacterial adhesive capabilities. The protein is Type II secretion system protein I (xcpV) of Pseudomonas aeruginosa (strain ATCC 15692 / DSM 22644 / CIP 104116 / JCM 14847 / LMG 12228 / 1C / PRS 101 / PAO1).